Here is a 72-residue protein sequence, read N- to C-terminus: Protein LITTLE ZIPPER 4 (72 aa).

Residues 14 to 44 adopt a coiled-coil conformation; the sequence is YIIKENERLRKKAQILNQENQQLLFELKQKL. The interval 42 to 72 is disordered; it reads QKLSKTKNSSGSNQGNNNNNNNLSSSSSASG. Over residues 49–72 the composition is skewed to low complexity; it reads NSSGSNQGNNNNNNNLSSSSSASG.

As to quaternary structure, interacts with REV.

Functionally, competitive inhibitor of the HD-ZIPIII transcription factors in shoot apical meristem (SAM) development. Acts by forming non-functional heterodimers. Part of a negative feedback loop. Essential for proper functioning of stem cells in the SAM. The chain is Protein LITTLE ZIPPER 4 from Arabidopsis thaliana (Mouse-ear cress).